A 194-amino-acid polypeptide reads, in one-letter code: MRLSDTHIKEYLNDGRIVIEPAPTDEMISGVTADLRLGNKFRTFHAHTAAYVDLSGPKDQLNKAMESIMSDEIVLDEGEAFFLHPGELALAITYEKVTLPADIVGWLDGRSSLARLGLMVHVTAHRIDPGWSGNIVLEFYNSGKLPLALRPMMKIGAMSFETLTGPCANPYNTRKDAKYKDQNSAVASRISDDR.

DCTP-binding positions include Arg-110 to Arg-115, Asp-128, Val-136 to Glu-138, Tyr-171, Lys-178, and Gln-182. Residue Glu-138 is the Proton donor/acceptor of the active site.

It belongs to the dCTP deaminase family. Homotrimer.

It catalyses the reaction dCTP + H2O + H(+) = dUTP + NH4(+). It functions in the pathway pyrimidine metabolism; dUMP biosynthesis; dUMP from dCTP (dUTP route): step 1/2. Its function is as follows. Catalyzes the deamination of dCTP to dUTP. The polypeptide is dCTP deaminase (Pseudoalteromonas translucida (strain TAC 125)).